Here is a 165-residue protein sequence, read N- to C-terminus: Large ribosomal subunit protein uL22c (165 aa).

This sequence belongs to the universal ribosomal protein uL22 family. Part of the 50S ribosomal subunit.

The protein resides in the plastid. Its subcellular location is the chloroplast. In terms of biological role, this protein binds specifically to 23S rRNA. Its function is as follows. The globular domain of the protein is located near the polypeptide exit tunnel on the outside of the subunit, while an extended beta-hairpin is found that lines the wall of the exit tunnel in the center of the 70S ribosome. This chain is Large ribosomal subunit protein uL22c (rpl22), found in Daucus carota (Wild carrot).